The following is a 324-amino-acid chain: MAFAKISQVAHYVPEQVVTNHDLAQIMDTNDEWISSRTGIRQRHISRTESTSDLATEVAKKLMAKAGITGEELDFIILATITPDSMMPSTAARVQANIGANKAFAFDLTAACSGFVFALSTAEKFIASGRFQKGLVIGSETLSKAVDWSDRSTAVLFGDGAGGVLLEASEQEHFLAESLNSDGSRSECLTYGHSGLHSPFSDQESADSFLKMDGRTVFDFAIRDVAKSIKQTIDESPIEVTDLDYLLLHQANDRILDKMARKIGVDRAKLPANMMEYGNTSAASIPILLSECVEQGLIPLDGSQTVLLSGFGGGLTWGTLILTI.

Active-site residues include cysteine 112 and histidine 249. The segment at 250–254 is ACP-binding; sequence QANDR. Residue asparagine 279 is part of the active site.

The protein belongs to the thiolase-like superfamily. FabH family. In terms of assembly, homodimer.

It localises to the cytoplasm. The enzyme catalyses malonyl-[ACP] + acetyl-CoA + H(+) = 3-oxobutanoyl-[ACP] + CO2 + CoA. The protein operates within lipid metabolism; fatty acid biosynthesis. Catalyzes the condensation reaction of fatty acid synthesis by the addition to an acyl acceptor of two carbons from malonyl-ACP. Catalyzes the first condensation reaction which initiates fatty acid synthesis and may therefore play a role in governing the total rate of fatty acid production. Possesses both acetoacetyl-ACP synthase and acetyl transacylase activities. Its substrate specificity determines the biosynthesis of branched-chain and/or straight-chain of fatty acids. The chain is Beta-ketoacyl-[acyl-carrier-protein] synthase III from Streptococcus pneumoniae serotype 2 (strain D39 / NCTC 7466).